Reading from the N-terminus, the 327-residue chain is Neurogenic differentiation factor 6-A (327 aa).

Positions 17–85 (GANFPRDCVG…KKMTKARVDR (69 aa)) are disordered. Over residues 24-46 (CVGDLKGNKQEPFEKEETLSHVM) the composition is skewed to basic and acidic residues. The segment covering 47-63 (DDDDSEKDEDEREDGQD) has biased composition (acidic residues). The segment covering 68-80 (PRRRGPRKKKMTK) has biased composition (basic residues). Residues 74–80 (RKKKMTK) carry the Nuclear localization signal motif. In terms of domain architecture, bHLH spans 88–140 (VRRMEANARERNRMHGLNNALDSLRKVVPCYSKTQKLSKIETLRLAKNYIWAL).

As to quaternary structure, efficient DNA binding requires dimerization with another bHLH protein. In terms of tissue distribution, embryonic olfactory bulbs. In adult, expressed in brain, eye, intestine, muscle, ovary and skin.

It localises to the nucleus. Its function is as follows. Differentiation factor required for neurogenesis. Acts as an upstream activator of isl1. The protein is Neurogenic differentiation factor 6-A of Danio rerio (Zebrafish).